Consider the following 147-residue polypeptide: Large ribosomal subunit protein bL9 (147 aa).

The protein belongs to the bacterial ribosomal protein bL9 family.

In terms of biological role, binds to the 23S rRNA. The chain is Large ribosomal subunit protein bL9 from Campylobacter jejuni subsp. jejuni serotype O:6 (strain 81116 / NCTC 11828).